A 192-amino-acid polypeptide reads, in one-letter code: Ion-translocating oxidoreductase complex subunit B (192 aa).

Residues 1-26 (MNAIWIAVAAVSLLGLAFGAILGYAS) form a hydrophobic region. Residues 32-91 (EDDPVVEKIDEILPQSQCGQCGYPGCRPYAEAISCNGEKINRCAPGGEAVMLKIAELLNV) enclose the 4Fe-4S domain. Residues C49, C52, C57, C74, C117, C120, C123, C127, C147, C150, C153, and C157 each coordinate [4Fe-4S] cluster. 4Fe-4S ferredoxin-type domains follow at residues 108-137 (MVAVIDENNCIGCTKCIQACPVDAIVGATR) and 138-167 (AMHTVMSDLCTGCNLCVDPCPTHCISLQPV).

It belongs to the 4Fe4S bacterial-type ferredoxin family. RnfB subfamily. In terms of assembly, the complex is composed of six subunits: RsxA, RsxB, RsxC, RsxD, RsxE and RsxG. [4Fe-4S] cluster is required as a cofactor.

It localises to the cell inner membrane. Part of a membrane-bound complex that couples electron transfer with translocation of ions across the membrane. Required to maintain the reduced state of SoxR. This is Ion-translocating oxidoreductase complex subunit B from Escherichia coli O139:H28 (strain E24377A / ETEC).